We begin with the raw amino-acid sequence, 208 residues long: Cytochrome c biogenesis ATP-binding export protein CcmA (208 aa).

An ABC transporter domain is found at 3-206 (LSGKDLTAYR…LEKFLPPQEK (204 aa)). An ATP-binding site is contributed by 35-42 (GPNGIGKS).

The protein belongs to the ABC transporter superfamily. CcmA exporter (TC 3.A.1.107) family. In terms of assembly, the complex is composed of two ATP-binding proteins (CcmA) and two transmembrane proteins (CcmB).

The protein resides in the cell inner membrane. It catalyses the reaction heme b(in) + ATP + H2O = heme b(out) + ADP + phosphate + H(+). Part of the ABC transporter complex CcmAB involved in the biogenesis of c-type cytochromes; once thought to export heme, this seems not to be the case, but its exact role is uncertain. Responsible for energy coupling to the transport system. This is Cytochrome c biogenesis ATP-binding export protein CcmA from Bartonella henselae (strain ATCC 49882 / DSM 28221 / CCUG 30454 / Houston 1) (Rochalimaea henselae).